A 144-amino-acid chain; its full sequence is Ribosome-binding factor A (144 aa).

Positions 120 to 144 are disordered; it reads DKRRMAESGREEDDAAPDETTEDNA. The span at 129–144 shows a compositional bias: acidic residues; the sequence is REEDDAAPDETTEDNA.

The protein belongs to the RbfA family. As to quaternary structure, monomer. Binds 30S ribosomal subunits, but not 50S ribosomal subunits or 70S ribosomes.

It is found in the cytoplasm. Functionally, one of several proteins that assist in the late maturation steps of the functional core of the 30S ribosomal subunit. Associates with free 30S ribosomal subunits (but not with 30S subunits that are part of 70S ribosomes or polysomes). Required for efficient processing of 16S rRNA. May interact with the 5'-terminal helix region of 16S rRNA. The sequence is that of Ribosome-binding factor A from Aeromonas hydrophila subsp. hydrophila (strain ATCC 7966 / DSM 30187 / BCRC 13018 / CCUG 14551 / JCM 1027 / KCTC 2358 / NCIMB 9240 / NCTC 8049).